The following is a 328-amino-acid chain: Homeobox protein DLX-2 (328 aa).

2 stretches are compositionally biased toward polar residues: residues 16-28 and 52-72; these read QIAA…QHQQ and ESPT…NQQH. 3 disordered regions span residues 16–81, 211–270, and 300–328; these read QIAA…GGGG, WKSG…SSPS, and LHPT…GTIF. The segment at residues 152–211 is a DNA-binding region (homeobox); sequence VRKPRTIYSSFQLAALQRRFQKTQYLALPERAELAASLGLTQTQVKIWFQNRRSKFKKMW. S232 carries the phosphoserine modification. The segment covering 250-264 has biased composition (gly residues); that stretch reads AGGGGPGSGGSGAGS.

The protein belongs to the distal-less homeobox family. In terms of assembly, interacts (via homeobox DNA-binding domain) with POU4F2; this interaction enhances retinal ganglion cell (RGC) differentiation.

The protein resides in the nucleus. Acts as a transcriptional activator. Activates transcription of CGA/alpha-GSU, via binding to the downstream activin regulatory element (DARE) in the gene promoter. Plays a role in terminal differentiation of interneurons, such as amacrine and bipolar cells in the developing retina. Likely to play a regulatory role in the development of the ventral forebrain. May play a role in craniofacial patterning and morphogenesis. The protein is Homeobox protein DLX-2 (DLX2) of Homo sapiens (Human).